The sequence spans 123 residues: Methicillin resistance regulatory protein MecI (123 aa).

The H-T-H motif DNA-binding region spans 7-71 (EISSAEWEFM…KDNKIFQYYS (65 aa)). The segment at 74–123 (EESDIKYKTSKNFINKVYKGGFNSLVLNFVEKEDLSQDEIEELRNILNKK) is important for dimerization.

It belongs to the BlaI transcriptional regulatory family. In terms of assembly, monomer and homodimer. Post-translationally, upon exposure to beta-lactams, proteolytic cleavage at a single site impairs dimerization and abolishes repressor activity.

The protein resides in the cytoplasm. Transcriptional repressor that constitutively blocks the transcription of the gene for the penicillin-binding protein MecA. Binds DNA as a dimer. The sequence is that of Methicillin resistance regulatory protein MecI (mecI) from Staphylococcus aureus (strain Mu50 / ATCC 700699).